Reading from the N-terminus, the 162-residue chain is Phosphopantetheine adenylyltransferase (162 aa).

Serine 11 is a binding site for substrate. Residues 11-12 (SF) and histidine 19 contribute to the ATP site. Residues lysine 43, valine 76, and arginine 90 each coordinate substrate. ATP contacts are provided by residues 91 to 93 (GLR), glutamate 101, and 126 to 132 (HLYISSS).

Belongs to the bacterial CoaD family. Homohexamer. Mg(2+) serves as cofactor.

Its subcellular location is the cytoplasm. It carries out the reaction (R)-4'-phosphopantetheine + ATP + H(+) = 3'-dephospho-CoA + diphosphate. Its pathway is cofactor biosynthesis; coenzyme A biosynthesis; CoA from (R)-pantothenate: step 4/5. Its activity is regulated as follows. Is inhibited by a series of cycloalkyl pyrimidines, which also show suppression of bacterial growth. Its function is as follows. Reversibly transfers an adenylyl group from ATP to 4'-phosphopantetheine, yielding dephospho-CoA (dPCoA) and pyrophosphate. The sequence is that of Phosphopantetheine adenylyltransferase from Streptococcus pneumoniae (strain ATCC BAA-255 / R6).